The chain runs to 512 residues: Circadian clock oscillator protein KaiC (512 aa).

2 KaiC domains span residues 1 to 243 and 257 to 512; these read MQFP…ISIF and VRVS…SSED. Gly45, Thr46, Gly47, Lys48, Thr49, Ser85, Lys220, Leu221, Arg222, Thr224, His226, Thr286, Gly287, Thr288, Gly289, Lys290, Thr291, and Leu292 together coordinate ATP. Thr49 serves as a coordination point for Mg(2+). Position 291 (Thr291) interacts with Mg(2+). A Mg(2+)-binding site is contributed by Glu314. Residue Trp327 coordinates ATP. Ser427 is modified (phosphoserine; by autocatalysis). Thr428 bears the Phosphothreonine; by autocatalysis mark. The ATP site is built by Arg447, Lys453, Met454, Arg455, Ser457, His459, and Lys461.

This sequence belongs to the KaiC family. In terms of assembly, homohexamer; hexamerization is dependent on ATP-binding. The KaiABC complex composition changes during the circadian cycle to control KaiC phosphorylation. Complexes KaiC(6), KaiA(2-4):KaiC(6), KaiB(6):KaiC(6) and KaiC(6):KaiB(6):KaiA(12) are among the most important forms, many form cooperatively. KaiC interacts with SasA, activating its autokinase function and leading to RpaA activation. The cofactor is Mg(2+). Phosphorylated on serine and threonine residues by autocatalysis. Has a 4 step phosphorylation cycle; the autokinase acts first on Thr-428, then Ser-427. When Ser-427 is modified KaiC switches to an autophosphatase mode, acting first on phospho-Thr-428 then phospho-Ser-427.

It carries out the reaction L-seryl-[protein] + ATP = O-phospho-L-seryl-[protein] + ADP + H(+). The enzyme catalyses L-threonyl-[protein] + ATP = O-phospho-L-threonyl-[protein] + ADP + H(+). It catalyses the reaction ATP + H2O = ADP + phosphate + H(+). Its activity is regulated as follows. The interaction with KaiA enhances its phosphorylation status, while the interaction with KaiB decreases it. In terms of biological role, central component of the KaiABC oscillator complex, which constitutes the main circadian regulator in cyanobacteria. Complex composition changes during the circadian cycle to control KaiC phosphorylation. KaiA stimulates KaiC autophosphorylation, while KaiB sequesters KaiA, leading to KaiC autodephosphorylation. Clock output pathways impact the RpaA transcriptional regulator. KaiC enhances the autophosphorylation activity of SasA, which then transfers its phosphate group to RpaA to activate it. KaiB and KaiC together enhance the phospho-RpaA dephosphatase activity of CikA. Its function is as follows. Has a weak, temperature-independent ATPase activity; ATPase activity defines the circadian period. The phosphorylation state of KaiC modulates its ATPase activity and effects KaiB binding. The sequence is that of Circadian clock oscillator protein KaiC from Parasynechococcus marenigrum (strain WH8102).